A 77-amino-acid chain; its full sequence is Large ribosomal subunit protein bL28 (77 aa).

This sequence belongs to the bacterial ribosomal protein bL28 family.

The chain is Large ribosomal subunit protein bL28 from Methylibium petroleiphilum (strain ATCC BAA-1232 / LMG 22953 / PM1).